Consider the following 381-residue polypeptide: CD209 antigen (381 aa).

The Cytoplasmic portion of the chain corresponds to 1 to 37 (MSDSKEPRLQQLGLLEEEQLGGVGFRQTRGYKSLAGC). 3 consecutive short sequence motifs (endocytosis signal) follow at residues 14–15 (LL), 16–18 (EEE), and 31–34 (YKSL). A helical; Signal-anchor for type II membrane protein transmembrane segment spans residues 38 to 58 (LGHGPLVLQLLSFTLLAGLLV). At 59-381 (QVSKVPSSLS…TPTTPNPPPE (323 aa)) the chain is on the extracellular side. N80 is a glycosylation site (N-linked (GlcNAc...) asparagine). Tandem repeats lie at residues 96-118 (KQQEIYQELTRLKAAVGELPEKS), 119-141 (KQQEIYQELTRLKAAVGELPEKS), 142-164 (KLQEIYQELTRLKAAVGELPEKS), 165-187 (KQQEIYQELSQLKAAVGDLPEKS), 188-210 (KQQEIYQKLTQLKAAVDGLPDRS), and 211-234 (KQQEIYQELIQLKAAVERLCRPCP). Residues 96–303 (KQQEIYQELT…GLSDLNHEGT (208 aa)) are 6 X approximate tandem repeats. 3 disulfide bridges follow: C233/C244, C261/C354, and C333/C346. The C-type lectin domain occupies 240–355 (FQGNCYFMSN…CNLAKFWICK (116 aa)). Ca(2+)-binding residues include E324, N326, I328, E331, N342, and D343. The disordered stretch occupies residues 359-381 (ASCSGDEERLLSPTPTTPNPPPE).

In terms of assembly, homotetramer. Interacts with C1QBP; the interaction is indicative for a C1q:C1QBP:CD209 signaling complex. Interacts with ICAM2 and ICAM3 by binding to mannose-like carbohydrates. Interacts (via C-type lectin domain) with CEACAM1 (via Lewis X moieties); this interaction is regulated by the glycosylation pattern of CEACAM1 on cell types and regulates contact between dendritic cells and neutrophils. Expressed in lymph nodes.

It is found in the membrane. Functionally, pathogen-recognition receptor expressed on the surface of immature dendritic cells (DCs) and involved in initiation of primary immune response. Thought to mediate the endocytosis of pathogens which are subsequently degraded in lysosomal compartments. The receptor returns to the cell membrane surface and the pathogen-derived antigens are presented to resting T-cells via MHC class II proteins to initiate the adaptive immune response. Probably recognizes in a calcium-dependent manner high mannose N-linked oligosaccharides in a variety of pathogen antigens. Its function is as follows. On DCs it is a high affinity receptor for ICAM2 and ICAM3 by binding to mannose-like carbohydrates. May act as a DC rolling receptor that mediates transendothelial migration of DC presursors from blood to tissues by binding endothelial ICAM2. Seems to regulate DC-induced T-cell proliferation by binding to ICAM3 on T-cells in the immunological synapse formed between DC and T-cells. The protein is CD209 antigen (CD209) of Chlorocebus aethiops (Green monkey).